The following is a 226-amino-acid chain: Enolase-phosphatase E1 (226 aa).

Belongs to the HAD-like hydrolase superfamily. MasA/MtnC family. As to quaternary structure, monomer. Requires Mg(2+) as cofactor.

The catalysed reaction is 5-methylsulfanyl-2,3-dioxopentyl phosphate + H2O = 1,2-dihydroxy-5-(methylsulfanyl)pent-1-en-3-one + phosphate. It functions in the pathway amino-acid biosynthesis; L-methionine biosynthesis via salvage pathway; L-methionine from S-methyl-5-thio-alpha-D-ribose 1-phosphate: step 3/6. It participates in amino-acid biosynthesis; L-methionine biosynthesis via salvage pathway; L-methionine from S-methyl-5-thio-alpha-D-ribose 1-phosphate: step 4/6. In terms of biological role, bifunctional enzyme that catalyzes the enolization of 2,3-diketo-5-methylthiopentyl-1-phosphate (DK-MTP-1-P) into the intermediate 2-hydroxy-3-keto-5-methylthiopentenyl-1-phosphate (HK-MTPenyl-1-P), which is then dephosphorylated to form the acireductone 1,2-dihydroxy-3-keto-5-methylthiopentene (DHK-MTPene). This is Enolase-phosphatase E1 from Shewanella baltica (strain OS195).